The following is a 501-amino-acid chain: Glucan endo-1,3-beta-glucosidase 3 (501 aa).

An N-terminal signal peptide occupies residues 1 to 18 (MAALLLLFLFLFASSALS). Asn88 and Asn107 each carry an N-linked (GlcNAc...) asparagine glycan. Glu116 functions as the Proton donor in the catalytic mechanism. N-linked (GlcNAc...) asparagine glycans are attached at residues Asn171 and Asn253. Glu263 functions as the Nucleophile in the catalytic mechanism. Residues Asn295, Asn353, and Asn357 are each glycosylated (N-linked (GlcNAc...) asparagine). Cys361 and Cys424 are joined by a disulfide. Residues Asn451, Asn456, Asn457, and Asn466 are each glycosylated (N-linked (GlcNAc...) asparagine). Ser470 carries GPI-anchor amidated serine lipidation. Positions 471–501 (GCIPKYYHHPHASFGDLTLLSLLLIIALVFL) are cleaved as a propeptide — removed in mature form.

This sequence belongs to the glycosyl hydrolase 17 family. Contains two additional disulfide bonds.

Its subcellular location is the cell membrane. The catalysed reaction is Hydrolysis of (1-&gt;3)-beta-D-glucosidic linkages in (1-&gt;3)-beta-D-glucans.. This Arabidopsis thaliana (Mouse-ear cress) protein is Glucan endo-1,3-beta-glucosidase 3.